The chain runs to 190 residues: dCTP deaminase, dUMP-forming (190 aa).

Residues 101–106 (KSSLGR), Asp-119, 127–129 (TLE), Gln-148, Tyr-162, and Gln-174 each bind dCTP. The Proton donor/acceptor role is filled by Glu-129. Residues 162 to 190 (YGSASAGSKYQGQRGPTPSRSYENFIKNT) are disordered. Residues 166–190 (SAGSKYQGQRGPTPSRSYENFIKNT) show a composition bias toward polar residues.

It belongs to the dCTP deaminase family. Homotrimer.

The enzyme catalyses dCTP + 2 H2O = dUMP + NH4(+) + diphosphate. Its pathway is pyrimidine metabolism; dUMP biosynthesis; dUMP from dCTP: step 1/1. Its function is as follows. Bifunctional enzyme that catalyzes both the deamination of dCTP to dUTP and the hydrolysis of dUTP to dUMP without releasing the toxic dUTP intermediate. The protein is dCTP deaminase, dUMP-forming of Mycobacterium leprae (strain Br4923).